Consider the following 496-residue polypeptide: L-arabinose isomerase (496 aa).

Mn(2+) contacts are provided by glutamate 305, glutamate 330, histidine 347, and histidine 446.

Belongs to the arabinose isomerase family. Requires Mn(2+) as cofactor.

It carries out the reaction beta-L-arabinopyranose = L-ribulose. It participates in carbohydrate degradation; L-arabinose degradation via L-ribulose; D-xylulose 5-phosphate from L-arabinose (bacterial route): step 1/3. In terms of biological role, catalyzes the conversion of L-arabinose to L-ribulose. This Bacillus subtilis (strain 168) protein is L-arabinose isomerase.